Reading from the N-terminus, the 246-residue chain is Probable transcriptional regulatory protein ESA_01378 (246 aa).

The protein belongs to the TACO1 family.

The protein localises to the cytoplasm. The polypeptide is Probable transcriptional regulatory protein ESA_01378 (Cronobacter sakazakii (strain ATCC BAA-894) (Enterobacter sakazakii)).